The sequence spans 405 residues: Cytoplasmic tRNA 2-thiolation protein 2 (405 aa).

It belongs to the CTU2/NCS2 family.

It localises to the cytoplasm. It participates in tRNA modification; 5-methoxycarbonylmethyl-2-thiouridine-tRNA biosynthesis. Its function is as follows. Plays a central role in 2-thiolation of mcm(5)S(2)U at tRNA wobble positions of tRNA(Lys), tRNA(Glu) and tRNA(Gln). May act by forming a heterodimer with NCS6/CTU1 that ligates sulfur from thiocarboxylated URM1 onto the uridine of tRNAs at wobble position. The protein is Cytoplasmic tRNA 2-thiolation protein 2 of Drosophila persimilis (Fruit fly).